Here is a 552-residue protein sequence, read N- to C-terminus: CTP synthase (552 aa).

Residues 1–270 form an amidoligase domain region; sequence MTKFVFVTGG…DGLICDKLRL (270 aa). S13 contacts CTP. UTP is bound at residue S13. Residues 14 to 19 and D71 each bind ATP; that span reads SLGKGI. Residues D71 and E144 each contribute to the Mg(2+) site. CTP is bound by residues 151–153, 191–196, and K227; these read DIE and KTKPTQ. UTP is bound by residues 191 to 196 and K227; that span reads KTKPTQ. The Glutamine amidotransferase type-1 domain occupies 295–548; sequence KIAMVGKYVE…VKAAIERQKA (254 aa). G357 contributes to the L-glutamine binding site. C384 functions as the Nucleophile; for glutamine hydrolysis in the catalytic mechanism. L-glutamine is bound by residues 385 to 388, E408, and R474; that span reads LGMQ. Catalysis depends on residues H521 and E523.

The protein belongs to the CTP synthase family. As to quaternary structure, homotetramer.

It catalyses the reaction UTP + L-glutamine + ATP + H2O = CTP + L-glutamate + ADP + phosphate + 2 H(+). The enzyme catalyses L-glutamine + H2O = L-glutamate + NH4(+). It carries out the reaction UTP + NH4(+) + ATP = CTP + ADP + phosphate + 2 H(+). Its pathway is pyrimidine metabolism; CTP biosynthesis via de novo pathway; CTP from UDP: step 2/2. Allosterically activated by GTP, when glutamine is the substrate; GTP has no effect on the reaction when ammonia is the substrate. The allosteric effector GTP functions by stabilizing the protein conformation that binds the tetrahedral intermediate(s) formed during glutamine hydrolysis. Inhibited by the product CTP, via allosteric rather than competitive inhibition. In terms of biological role, catalyzes the ATP-dependent amination of UTP to CTP with either L-glutamine or ammonia as the source of nitrogen. Regulates intracellular CTP levels through interactions with the four ribonucleotide triphosphates. The sequence is that of CTP synthase from Delftia acidovorans (strain DSM 14801 / SPH-1).